A 320-amino-acid polypeptide reads, in one-letter code: GPI-specific phospholipase A2-like PGAP3 (320 aa).

The N-terminal stretch at M1–G20 is a signal peptide. At S21–R98 the chain is on the lumenal side. An N-linked (GlcNAc...) asparagine glycan is attached at N40. A helical transmembrane segment spans residues F99–L119. Residues V120 to M135 lie on the Cytoplasmic side of the membrane. Residues Y136–F156 form a helical membrane-spanning segment. Residues H157–Y169 are Lumenal-facing. Residues F170–L190 form a helical membrane-spanning segment. At Q191–P193 the chain is on the cytoplasmic side. Residues A194–L214 form a helical membrane-spanning segment. Residues S215–N224 are Lumenal-facing. Residues L225–W245 traverse the membrane as a helical segment. The Cytoplasmic portion of the chain corresponds to N246 to V257. The helical transmembrane segment at V258 to F278 threads the bilayer. Residue W279 is a topological domain, lumenal. A helical transmembrane segment spans residues V280–F299. Residues S300 to D320 are Cytoplasmic-facing.

The protein belongs to the PGAP3 family. In terms of tissue distribution, ubiquitously expressed, with highest levels in thyroid and placenta.

The protein resides in the golgi apparatus membrane. Functionally, involved in the fatty acid remodeling steps of GPI-anchor maturation where the unsaturated acyl chain at sn-2 of inositol phosphate is replaced by a saturated stearoyl chain. May catalyze the first step of the fatty acid remodeling, by removing the unsaturated acyl chain at sn-2 of inositol phosphate, generating a lyso-GPI intermediate. The fatty acid remodeling steps is critical for the integration of GPI-APs into lipid rafts. The protein is GPI-specific phospholipase A2-like PGAP3 of Homo sapiens (Human).